Here is a 900-residue protein sequence, read N- to C-terminus: MAPAKKREKDSNPDGSAANGIIGLTHGAPDASNAGSTVPPTAEGQVKLNGHQQEQELFLQAFEKPTQIYRYLRNRHETNPIFLNRTLSYMKERMSRNNKKRISFQVNSMLESITQKSEAVSQNYLHVIYDSLHEKLPARLDNESGEDLLQEQLLCEAGESVSVETTLYKITRSKRKDSTLDFQELLSKCSQIVYNPKDRVGEHATISIPLQTMRPMGEQHTLYKLLFRIKVLSPSTCNDENAETPPNKRSRPNEKMFGSELILYEKSSGFITEGEYEAMLQPLNSTSIKSFSPKKCTWETMPDSYIPLSLTYDVYQQSPMLKFHLTLSNEQLPEMISAPELQRYVQHLDAVAEMNYNNNNYNNNNNCSGLKNGSGGGNSTVCKTTPEHIQIVYNFMYSNNTRQQTEYTQELNCPWCGLDCLRLYALLKHLKLCHARFNFTYQPAGSGARIDVTINDAYDGSYAGSPYDLAGPSGSSFARTCGPVRRTSVTSLMVCRPRRQKTCLDEFLELDEDEISNQRSYITGHNRLYHHTETCLPVHPKELDIDSEGESDPLWLRQKTIQMIDEFSDVNEGEKELMKLWNLHVMRHGFVGDCQLPIACEMFLDAKGTEIVRKNLYRNFILHMCSLFDYGLIAAETVYKTVQKLQGLLSKYAAGQELMQRQREEQLKYWLDVGMHKKQEDPKTLKSPQKPAPPADQASTSSASTSGSGSGSSSMQPPKRMPAHLKRGSAASSPGVQSKGTENGTNGSNSSSSNSKNVAKKSADQPLSTLANTRERRSEYGQKRNVSGSRLAATPASKRKLSSKDNTVLNKRQRYSDGSPGTGIGNGHGGGSGSGANRNKSNNHSLPATSNNASSSSSNSKRAIARRRSTSERTKASGSTGGGAGGVRTRLSVPAKYERR.

Positions Met-1–Asn-12 are enriched in basic and acidic residues. Residues Met-1–Gly-44 form a disordered region. The segment at Leu-411 to His-434 adopts a C2H2-type zinc-finger fold. The segment at Arg-527 to Phe-603 is VEFS-box. Ser-547 carries the post-translational modification Phosphoserine. The tract at residues Lys-678 to Arg-900 is disordered. Composition is skewed to low complexity over residues Ala-698–Ser-714 and Ser-738–Asn-757. The span at Thr-773–Gln-782 shows a compositional bias: basic and acidic residues. Residues Pro-820 to Ser-834 show a composition bias toward gly residues. The segment covering Ser-850–Arg-862 has biased composition (low complexity).

The protein belongs to the VEFS (VRN2-EMF2-FIS2-SU(Z)12) family. In terms of assembly, component of the polycomb repressive complex 2 (PRC2, also known as the Esc/E(Z) complex), composed of Caf1-55, esc, E(z), Su(z)12, and possibly pho. PRC2 associates with the accessory components Jarid2 and jing to form the PRC2 Jarid2-jing variant (PRC2.2). PRC2 may also associate with Pcl and HDAC1/Rpd3 during early embryogenesis. This complex is distinct from the PRC1 complex, which contains many other PcG proteins like Pc, Ph, Psc, Su(z)2. The two complexes however cooperate and interact together during the first 3 hours of development to establish PcG silencing.

The protein localises to the nucleus. It localises to the chromosome. Polycomb group (PcG) protein. While PcG proteins are generally required to maintain the transcriptionally repressive state of homeotic genes throughout development, this protein is specifically required during the first 6 hours of embryogenesis to establish the repressed state. Component of the Esc/E(z) complex, which methylates 'Lys-9' (H3K9me) and 'Lys-27' (H3K27me) of histone H3, leading to transcriptional repression of the affected target gene. The Esc/E(z) complex is necessary but not sufficient for the repression of homeotic target genes, suggesting that the recruitment of the distinct PRC1 complex is also required. The protein is Polycomb protein Su(z)12 (Su(z)12) of Drosophila melanogaster (Fruit fly).